The chain runs to 429 residues: Probable M18 family aminopeptidase 2 (429 aa).

His82, His156, and His401 together coordinate Zn(2+).

It belongs to the peptidase M18 family. The cofactor is Zn(2+).

This Pseudomonas savastanoi pv. phaseolicola (strain 1448A / Race 6) (Pseudomonas syringae pv. phaseolicola (strain 1448A / Race 6)) protein is Probable M18 family aminopeptidase 2.